A 160-amino-acid chain; its full sequence is Cytochrome b6-f complex subunit 4 (160 aa).

Helical transmembrane passes span 36–56 (LLYI…GLSV), 95–115 (LLGV…PFIE), and 131–151 (TLFL…TLPI).

Belongs to the cytochrome b family. PetD subfamily. The 4 large subunits of the cytochrome b6-f complex are cytochrome b6, subunit IV (17 kDa polypeptide, petD), cytochrome f and the Rieske protein, while the 4 small subunits are petG, petL, petM and petN. The complex functions as a dimer.

It is found in the plastid. Its subcellular location is the chloroplast thylakoid membrane. Component of the cytochrome b6-f complex, which mediates electron transfer between photosystem II (PSII) and photosystem I (PSI), cyclic electron flow around PSI, and state transitions. The sequence is that of Cytochrome b6-f complex subunit 4 from Tetradesmus obliquus (Green alga).